Reading from the N-terminus, the 369-residue chain is Chaperone protein DnaJ (369 aa).

The region spanning 7–73 (DYYEILGVPR…QKRAMYDRFG (67 aa)) is the J domain. A CR-type zinc finger spans residues 143 to 225 (GAEIPVEYER…CGGSGRVLRK (83 aa)). Positions 156, 159, 173, 176, 199, 202, 213, and 216 each coordinate Zn(2+). 4 CXXCXGXG motif repeats span residues 156–163 (CPRCGGTG), 173–180 (CPSCGGTG), 199–206 (CERCGGTG), and 213–220 (CHECGGSG).

This sequence belongs to the DnaJ family. Homodimer. Requires Zn(2+) as cofactor.

Its subcellular location is the cytoplasm. Participates actively in the response to hyperosmotic and heat shock by preventing the aggregation of stress-denatured proteins and by disaggregating proteins, also in an autonomous, DnaK-independent fashion. Unfolded proteins bind initially to DnaJ; upon interaction with the DnaJ-bound protein, DnaK hydrolyzes its bound ATP, resulting in the formation of a stable complex. GrpE releases ADP from DnaK; ATP binding to DnaK triggers the release of the substrate protein, thus completing the reaction cycle. Several rounds of ATP-dependent interactions between DnaJ, DnaK and GrpE are required for fully efficient folding. Also involved, together with DnaK and GrpE, in the DNA replication of plasmids through activation of initiation proteins. This Thermotoga petrophila (strain ATCC BAA-488 / DSM 13995 / JCM 10881 / RKU-1) protein is Chaperone protein DnaJ.